Here is a 624-residue protein sequence, read N- to C-terminus: tRNA uridine 5-carboxymethylaminomethyl modification enzyme MnmG (624 aa).

FAD contacts are provided by residues 16 to 21 (GAGHAG), V128, and S183. An NAD(+)-binding site is contributed by 275 to 289 (GPRYCPSIEDKVVRF). Q372 contributes to the FAD binding site.

This sequence belongs to the MnmG family. As to quaternary structure, homodimer. Heterotetramer of two MnmE and two MnmG subunits. It depends on FAD as a cofactor.

The protein localises to the cytoplasm. Its function is as follows. NAD-binding protein involved in the addition of a carboxymethylaminomethyl (cmnm) group at the wobble position (U34) of certain tRNAs, forming tRNA-cmnm(5)s(2)U34. In Geobacter metallireducens (strain ATCC 53774 / DSM 7210 / GS-15), this protein is tRNA uridine 5-carboxymethylaminomethyl modification enzyme MnmG.